Consider the following 266-residue polypeptide: Esterase AGAP003155 (266 aa).

Active-site charge relay system residues include serine 114, aspartate 172, and histidine 199. Positions 231–266 (ATEENSFHLEGQEEAEESALQPVHEGLQNGSDSDSD) are disordered.

It belongs to the LovG family.

This chain is Esterase AGAP003155, found in Anopheles gambiae (African malaria mosquito).